Here is a 376-residue protein sequence, read N- to C-terminus: Succinate--CoA ligase [ADP-forming] subunit beta (376 aa).

Positions 9 to 234 constitute an ATP-grasp domain; that stretch reads KAIAKKYGIP…ERELSELEKE (226 aa). ATP contacts are provided by residues K45, 52–54, E91, E94, and E99; that span reads GRG. Residues N191 and D204 each coordinate Mg(2+). Substrate-binding positions include N254 and 311–313; that span reads GIT.

Belongs to the succinate/malate CoA ligase beta subunit family. Heterotetramer of two alpha and two beta subunits. The cofactor is Mg(2+).

The catalysed reaction is succinate + ATP + CoA = succinyl-CoA + ADP + phosphate. It catalyses the reaction GTP + succinate + CoA = succinyl-CoA + GDP + phosphate. The protein operates within carbohydrate metabolism; tricarboxylic acid cycle; succinate from succinyl-CoA (ligase route): step 1/1. In terms of biological role, succinyl-CoA synthetase functions in the citric acid cycle (TCA), coupling the hydrolysis of succinyl-CoA to the synthesis of either ATP or GTP and thus represents the only step of substrate-level phosphorylation in the TCA. The beta subunit provides nucleotide specificity of the enzyme and binds the substrate succinate, while the binding sites for coenzyme A and phosphate are found in the alpha subunit. In Ignicoccus hospitalis (strain KIN4/I / DSM 18386 / JCM 14125), this protein is Succinate--CoA ligase [ADP-forming] subunit beta.